The following is a 349-amino-acid chain: tRNA pseudouridine synthase D (349 aa).

Phenylalanine 27 lines the substrate pocket. Residue aspartate 80 is the Nucleophile of the active site. Asparagine 129 contributes to the substrate binding site. Residues 155 to 303 (GVPNYFGAQR…VEAARRAMLL (149 aa)) form the TRUD domain. Phenylalanine 329 serves as a coordination point for substrate.

It belongs to the pseudouridine synthase TruD family.

It carries out the reaction uridine(13) in tRNA = pseudouridine(13) in tRNA. Responsible for synthesis of pseudouridine from uracil-13 in transfer RNAs. The chain is tRNA pseudouridine synthase D from Citrobacter koseri (strain ATCC BAA-895 / CDC 4225-83 / SGSC4696).